Here is a 219-residue protein sequence, read N- to C-terminus: tRNA (guanine-N(7)-)-methyltransferase (219 aa).

S-adenosyl-L-methionine is bound by residues Glu43, Asp68, Glu101, and Asn124. Substrate-binding residues include Lys128 and Asp160.

The protein belongs to the class I-like SAM-binding methyltransferase superfamily. TrmB family.

It carries out the reaction guanosine(46) in tRNA + S-adenosyl-L-methionine = N(7)-methylguanosine(46) in tRNA + S-adenosyl-L-homocysteine. It participates in tRNA modification; N(7)-methylguanine-tRNA biosynthesis. Functionally, catalyzes the formation of N(7)-methylguanine at position 46 (m7G46) in tRNA. In Clostridium beijerinckii (strain ATCC 51743 / NCIMB 8052) (Clostridium acetobutylicum), this protein is tRNA (guanine-N(7)-)-methyltransferase.